Here is a 330-residue protein sequence, read N- to C-terminus: Basic leucine zipper 2 (330 aa).

The disordered stretch occupies residues 1-207; it reads MAQLPPKIPT…NRQSAQRSRV (207 aa). Over residues 21–34 the composition is skewed to basic residues; that stretch reads GHHHHAAHGHHHQR. Pro residues predominate over residues 45 to 56; sequence PLPPFPLPPPAP. Composition is skewed to low complexity over residues 57–72 and 139–151; these read ANGG…QHQP and QPAA…SSPS. Over residues 155–166 the composition is skewed to basic and acidic residues; that stretch reads SMNDEKQDKGET. A bZIP domain is found at 188–244; that stretch reads DPKRVKRILANRQSAQRSRVRKLQYISELERSVTSLQTEVSALSPRVAFLDHQRSLL. The interval 190 to 209 is basic motif; it reads KRVKRILANRQSAQRSRVRK. Positions 216 to 244 are leucine-zipper; the sequence is LERSVTSLQTEVSALSPRVAFLDHQRSLL. The segment at 267 to 330 is disordered; that stretch reads GGTEEGDREA…LVIGRDPDAL (64 aa).

As to expression, expressed in roots, shoots and panicles.

It localises to the nucleus. In terms of biological role, transcription regulator. The sequence is that of Basic leucine zipper 2 (BZIP02) from Oryza sativa subsp. japonica (Rice).